A 544-amino-acid chain; its full sequence is Apolipoprotein N-acyltransferase 1 (544 aa).

Helical transmembrane passes span 30–50 (LNLN…FLLL), 57–79 (FSFL…WIIF), 91–111 (KYCI…SYFS), 115–135 (FIFQ…GFLG), 157–177 (IFGV…SASF), and 197–217 (PMMI…FTKI). Residues 225-501 (ARIALVQPNR…KDILVADVTV (277 aa)) form the CN hydrolase domain. Catalysis depends on glutamate 272, which acts as the Proton acceptor. The active site involves lysine 360. Cysteine 412 serves as the catalytic Nucleophile. The chain crosses the membrane as a helical span at residues 514 to 534 (GDFFGVLCTIVLILNLCFIII).

This sequence belongs to the CN hydrolase family. Apolipoprotein N-acyltransferase subfamily.

It is found in the cell inner membrane. It catalyses the reaction N-terminal S-1,2-diacyl-sn-glyceryl-L-cysteinyl-[lipoprotein] + a glycerophospholipid = N-acyl-S-1,2-diacyl-sn-glyceryl-L-cysteinyl-[lipoprotein] + a 2-acyl-sn-glycero-3-phospholipid + H(+). Its pathway is protein modification; lipoprotein biosynthesis (N-acyl transfer). Functionally, catalyzes the phospholipid dependent N-acylation of the N-terminal cysteine of apolipoprotein, the last step in lipoprotein maturation. The chain is Apolipoprotein N-acyltransferase 1 from Treponema denticola (strain ATCC 35405 / DSM 14222 / CIP 103919 / JCM 8153 / KCTC 15104).